The chain runs to 72 residues: Large ribosomal subunit protein bL31 (72 aa).

Zn(2+) contacts are provided by Cys16, Cys18, Cys37, and Cys40.

The protein belongs to the bacterial ribosomal protein bL31 family. Type A subfamily. Part of the 50S ribosomal subunit. Zn(2+) is required as a cofactor.

Functionally, binds the 23S rRNA. The chain is Large ribosomal subunit protein bL31 from Pseudomonas fluorescens (strain Pf0-1).